A 450-amino-acid polypeptide reads, in one-letter code: Folate synthesis bifunctional protein (450 aa).

Residues 1 to 166 form an HPPK region; that stretch reads MTTWNFVCLG…TFAELAAIYP (166 aa). The 262-residue stretch at 180-441 folds into the Pterin-binding domain; sequence TQIMGIVNVT…QVEGNRRVLA (262 aa). Residues 182–450 form a DHPS region; the sequence is IMGIVNVTDD…AAAAWSGMPV (269 aa). Residue Asn187 participates in Mg(2+) binding. Residues Thr227, Asp267, Asn287, Asp358, Lys395, and 429-431 each bind (7,8-dihydropterin-6-yl)methyl diphosphate; that span reads RVH.

This sequence in the C-terminal section; belongs to the DHPS family. The protein in the N-terminal section; belongs to the HPPK family. Requires Mg(2+) as cofactor.

It carries out the reaction 6-hydroxymethyl-7,8-dihydropterin + ATP = (7,8-dihydropterin-6-yl)methyl diphosphate + AMP + H(+). The enzyme catalyses (7,8-dihydropterin-6-yl)methyl diphosphate + 4-aminobenzoate = 7,8-dihydropteroate + diphosphate. Its pathway is cofactor biosynthesis; tetrahydrofolate biosynthesis; 2-amino-4-hydroxy-6-hydroxymethyl-7,8-dihydropteridine diphosphate from 7,8-dihydroneopterin triphosphate: step 4/4. The protein operates within cofactor biosynthesis; tetrahydrofolate biosynthesis; 7,8-dihydrofolate from 2-amino-4-hydroxy-6-hydroxymethyl-7,8-dihydropteridine diphosphate and 4-aminobenzoate: step 1/2. The polypeptide is Folate synthesis bifunctional protein (folKP) (Chlamydia muridarum (strain MoPn / Nigg)).